Reading from the N-terminus, the 205-residue chain is Octanoyltransferase (205 aa).

Residues 29-204 (AETPDEIWIV…HLLQQLDQKN (176 aa)) enclose the BPL/LPL catalytic domain. Substrate-binding positions include 68–75 (RGGQVTYH), 135–137 (ALG), and 148–150 (GVS). C166 serves as the catalytic Acyl-thioester intermediate.

The protein belongs to the LipB family.

Its subcellular location is the cytoplasm. It catalyses the reaction octanoyl-[ACP] + L-lysyl-[protein] = N(6)-octanoyl-L-lysyl-[protein] + holo-[ACP] + H(+). It functions in the pathway protein modification; protein lipoylation via endogenous pathway; protein N(6)-(lipoyl)lysine from octanoyl-[acyl-carrier-protein]: step 1/2. Catalyzes the transfer of endogenously produced octanoic acid from octanoyl-acyl-carrier-protein onto the lipoyl domains of lipoate-dependent enzymes. Lipoyl-ACP can also act as a substrate although octanoyl-ACP is likely to be the physiological substrate. This chain is Octanoyltransferase, found in Dechloromonas aromatica (strain RCB).